The primary structure comprises 743 residues: MTISNTIPITPELIAGHGLKPDEYQRILDLIGREPTFTELGIFSAMWNEHCSYKSSKKWLRTLPTKGPRVIQGPGENAGVVDIDDGDCVVFKMESHNHPSYIEPYQGAATGVGGILRDVFTMGARPIAAMNALRFGEPDHPKTRHLVSGVVSGVGGYGNSFGVPTVGGEVEFDARYNGNILVNAFAAGIAKSNAIFLSEAKGVGLPVVYLGAKTGRDGVGGATMASAEFDESIEEKRPTVQVGDPFTEKCLLEACLELMQTGAVIAIQDMGAAGLTCSAVEMGAKGDLGILLELDKVPVREERMTAYEMMLSESQERMLMVLQPEKEEQAKAIFVKWGLDFAIVGKTTDDLRFRVVHQGEEVANLPIKDLGDQAPEYDRPWRECGKPAPLPANLVAAPKNYGQALLQLVGSANQSSRRWVYEQYDTLIQGNSLQLPGGDAGVVRVDGHKSKALAFSSDVTPRYVEADPFEGGKQAVAECWRNITATGAEPLAATDNLNFGNPEKPEIMGQFVQAVKGIGEACRALDFPIVSGNVSLYNETNGVAILPTPTIAGVGLLPDWRKMARIGSANDGDKVIMIGLDGSHLGQSVYLRDVLDSREGPAPEVDLFAERRNGDFVRSVIRNGQATACHDISSGGLAVALAEMAMASGKGLTIDLDECKGAPHALLFGEDQARYVLTVPADVADFVCANAEGAGVPFRRLGTVGGDALVVGDLIALPIQQLRDTHESWFPDFMEGRGELAAE.

H50 is a catalytic residue. The ATP site is built by Y53 and K92. Mg(2+) is bound at residue E94. Substrate-binding positions include 95–98 (SHNH) and R117. Residue H96 is the Proton acceptor of the active site. D118 contacts Mg(2+). Position 241 (Q241) interacts with substrate. D269 contacts Mg(2+). 313-315 (ESQ) is a binding site for substrate. Residues D495 and G532 each contribute to the ATP site. N533 contacts Mg(2+). S535 is a substrate binding site.

This sequence belongs to the FGAMS family. Monomer. Part of the FGAM synthase complex composed of 1 PurL, 1 PurQ and 2 PurS subunits.

The protein resides in the cytoplasm. It catalyses the reaction N(2)-formyl-N(1)-(5-phospho-beta-D-ribosyl)glycinamide + L-glutamine + ATP + H2O = 2-formamido-N(1)-(5-O-phospho-beta-D-ribosyl)acetamidine + L-glutamate + ADP + phosphate + H(+). Its pathway is purine metabolism; IMP biosynthesis via de novo pathway; 5-amino-1-(5-phospho-D-ribosyl)imidazole from N(2)-formyl-N(1)-(5-phospho-D-ribosyl)glycinamide: step 1/2. In terms of biological role, part of the phosphoribosylformylglycinamidine synthase complex involved in the purines biosynthetic pathway. Catalyzes the ATP-dependent conversion of formylglycinamide ribonucleotide (FGAR) and glutamine to yield formylglycinamidine ribonucleotide (FGAM) and glutamate. The FGAM synthase complex is composed of three subunits. PurQ produces an ammonia molecule by converting glutamine to glutamate. PurL transfers the ammonia molecule to FGAR to form FGAM in an ATP-dependent manner. PurS interacts with PurQ and PurL and is thought to assist in the transfer of the ammonia molecule from PurQ to PurL. The sequence is that of Phosphoribosylformylglycinamidine synthase subunit PurL from Rhizobium etli (strain ATCC 51251 / DSM 11541 / JCM 21823 / NBRC 15573 / CFN 42).